The primary structure comprises 145 residues: Lysozyme-like protein 4 (145 aa).

The signal sequence occupies residues 1–19; it reads MQLYLVLLLISYLLTPIGA. In terms of domain architecture, C-type lysozyme spans 20 to 145; it reads SILGRCVVAK…LDRWLDGCEL (126 aa). 4 disulfides stabilise this stretch: Cys25–Cys143, Cys49–Cys130, Cys84–Cys95, and Cys91–Cys109. Glu54 is a catalytic residue.

The protein belongs to the glycosyl hydrolase 22 family. In terms of assembly, monomer. In terms of tissue distribution, expressed in the brain, lung, ovary, uterus and testis. In testis expressed in the germinal epithelium and on the maturing spermatozoa (at protein level).

It localises to the secreted. The protein resides in the cytoplasmic vesicle. Its subcellular location is the secretory vesicle. It is found in the acrosome. The protein localises to the cell projection. It localises to the cilium. The protein resides in the flagellum. May be involved in fertilization. Has no detectable bacteriolytic and lysozyme activities in vitro. This Rattus norvegicus (Rat) protein is Lysozyme-like protein 4 (Lyzl4).